We begin with the raw amino-acid sequence, 177 residues long: Large ribosomal subunit protein uL6 (177 aa).

It belongs to the universal ribosomal protein uL6 family. Part of the 50S ribosomal subunit.

Functionally, this protein binds to the 23S rRNA, and is important in its secondary structure. It is located near the subunit interface in the base of the L7/L12 stalk, and near the tRNA binding site of the peptidyltransferase center. The protein is Large ribosomal subunit protein uL6 of Pseudomonas fluorescens (strain Pf0-1).